Reading from the N-terminus, the 277-residue chain is MEVKAFIEIMRPHNCILAGVVGILGSLVAYEGIPSIEKLGLVFLVVYLGCSAGNTINDYFDVEIDRVNRPNRPIPRGAIPRKVALYYALLQYMLGLALARFLGVEALLFALGAYALTFIYAWKLKPLPFIGNVAVALLTAATPIYGALGVGRVGLAGYLAICAFLVNVSREIMKDIEDIEGDMKMGAKTLPIIIGKRRAAMISSIFGVLTVITSFLPVKVGIGLGYAPIILVDAMILKASIDVVKNPESASKGQKTLKIATFIAVISFLLGALTKGV.

The next 7 helical transmembrane spans lie at 16–36, 40–60, 101–121, 129–149, 153–173, 205–225, and 257–277; these read ILAGVVGILGSLVAYEGIPSI, GLVFLVVYLGCSAGNTINDYF, FLGVEALLFALGAYALTFIYA, FIGNVAVALLTAATPIYGALG, VGLAGYLAICAFLVNVSREIM, IFGVLTVITSFLPVKVGIGLG, and LKIATFIAVISFLLGALTKGV.

This sequence belongs to the UbiA prenyltransferase family. DGGGP synthase subfamily. Mg(2+) is required as a cofactor.

The protein resides in the cell membrane. The enzyme catalyses sn-3-O-(geranylgeranyl)glycerol 1-phosphate + (2E,6E,10E)-geranylgeranyl diphosphate = 2,3-bis-O-(geranylgeranyl)-sn-glycerol 1-phosphate + diphosphate. It functions in the pathway membrane lipid metabolism; glycerophospholipid metabolism. Its function is as follows. Prenyltransferase that catalyzes the transfer of the geranylgeranyl moiety of geranylgeranyl diphosphate (GGPP) to the C2 hydroxyl of (S)-3-O-geranylgeranylglyceryl phosphate (GGGP). This reaction is the second ether-bond-formation step in the biosynthesis of archaeal membrane lipids. This Pyrococcus abyssi (strain GE5 / Orsay) protein is Digeranylgeranylglyceryl phosphate synthase.